We begin with the raw amino-acid sequence, 72 residues long: uncharacterized protein (72 aa).

This is an uncharacterized protein from Acidianus hospitalis (AFV-1).